Reading from the N-terminus, the 672-residue chain is Threonine--tRNA ligase (672 aa).

Residues 2–60 enclose the TGS domain; the sequence is SEPKNILLTVDGELREVTHGTTGLDLFREKPTTAVMRVDGLLWDLAREIPAGASVESVD. The segment at 260–567 is catalytic; that stretch reads DHRKLGAELD…LTEHYAGAFP (308 aa). Residues Cys366, His417, and His544 each contribute to the Zn(2+) site.

The protein belongs to the class-II aminoacyl-tRNA synthetase family. Homodimer. It depends on Zn(2+) as a cofactor.

The protein localises to the cytoplasm. The enzyme catalyses tRNA(Thr) + L-threonine + ATP = L-threonyl-tRNA(Thr) + AMP + diphosphate + H(+). Catalyzes the attachment of threonine to tRNA(Thr) in a two-step reaction: L-threonine is first activated by ATP to form Thr-AMP and then transferred to the acceptor end of tRNA(Thr). Also edits incorrectly charged L-seryl-tRNA(Thr). This is Threonine--tRNA ligase from Micrococcus luteus (strain ATCC 4698 / DSM 20030 / JCM 1464 / CCM 169 / CCUG 5858 / IAM 1056 / NBRC 3333 / NCIMB 9278 / NCTC 2665 / VKM Ac-2230) (Micrococcus lysodeikticus).